Here is a 544-residue protein sequence, read N- to C-terminus: Elongator complex protein 3 (544 aa).

The 291-residue stretch at 79-369 folds into the Radical SAM core domain; it reads RTASGIAVVA…YRIQRDIPMP (291 aa). Cys96, Cys106, and Cys109 together coordinate [4Fe-4S] cluster. Acetyl-CoA-binding positions include Lys161, 472-475, 495-497, and Tyr528; these read ELHV and FGT. In terms of domain architecture, N-acetyltransferase spans 393–544; sequence TKCRDIRARE…LDGPYMSKWL (152 aa).

The protein belongs to the ELP3 family. As to quaternary structure, component of the elongator complex. It depends on [4Fe-4S] cluster as a cofactor.

It is found in the cytoplasm. It carries out the reaction uridine(34) in tRNA + acetyl-CoA + S-adenosyl-L-methionine + H2O = 5-(carboxymethyl)uridine(34) in tRNA + 5'-deoxyadenosine + L-methionine + CoA + 2 H(+). It participates in tRNA modification; 5-methoxycarbonylmethyl-2-thiouridine-tRNA biosynthesis. In terms of biological role, catalytic tRNA acetyltransferase subunit of the elongator complex which is required for multiple tRNA modifications, including mcm5U (5-methoxycarbonylmethyl uridine), mcm5s2U (5-methoxycarbonylmethyl-2-thiouridine), and ncm5U (5-carbamoylmethyl uridine). In the elongator complex, acts as a tRNA uridine(34) acetyltransferase, which mediates formation of carboxymethyluridine in the wobble base at position 34 in tRNAs. The chain is Elongator complex protein 3 from Schizosaccharomyces pombe (strain 972 / ATCC 24843) (Fission yeast).